A 59-amino-acid polypeptide reads, in one-letter code: Large ribosomal subunit protein uL30 (59 aa).

Belongs to the universal ribosomal protein uL30 family. In terms of assembly, part of the 50S ribosomal subunit.

The sequence is that of Large ribosomal subunit protein uL30 from Mycobacterium sp. (strain JLS).